The sequence spans 497 residues: Probable FAD-binding monooxygenase AlmA (497 aa).

Residues 4 to 24 (QVDVLIIGAGISGIGLAVHLS) traverse the membrane as a helical segment. Positions 15, 36, 56, 62, and 104 each coordinate FAD. Residue 54-56 (RSD) coordinates NADP(+). NADP(+)-binding positions include 184 to 190 (SGATAIT), 208 to 209 (RS), and 292 to 293 (RL). Valine 395 provides a ligand contact to FAD.

The protein belongs to the FAD-binding monooxygenase family. The cofactor is FAD.

The protein resides in the cell membrane. It participates in hydrocarbon metabolism; alkane degradation. In terms of biological role, is involved in the degradation of n-alkanes with C chain lengths of 32 and longer. Allows Acinetobacter sp. strain DSM 17874 to grow on long-chain n-alkanes such as dotriacontane (C32H66) or hexatriacontane (C36H74) as a sole carbon source. The chain is Probable FAD-binding monooxygenase AlmA from Acinetobacter sp.